We begin with the raw amino-acid sequence, 207 residues long: Large ribosomal subunit protein uL4 (207 aa).

The protein belongs to the universal ribosomal protein uL4 family. Part of the 50S ribosomal subunit.

One of the primary rRNA binding proteins, this protein initially binds near the 5'-end of the 23S rRNA. It is important during the early stages of 50S assembly. It makes multiple contacts with different domains of the 23S rRNA in the assembled 50S subunit and ribosome. Its function is as follows. Forms part of the polypeptide exit tunnel. In Geobacter metallireducens (strain ATCC 53774 / DSM 7210 / GS-15), this protein is Large ribosomal subunit protein uL4.